The primary structure comprises 180 residues: Large ribosomal subunit protein uL22 (180 aa).

2 disordered regions span residues 1-20 (MTKP…CKSR) and 160-180 (PKPA…EISA). Over residues 8-20 (KTPSNPEKSCKSR) the composition is skewed to polar residues.

It belongs to the universal ribosomal protein uL22 family.

The polypeptide is Large ribosomal subunit protein uL22 (rpl17) (Dictyostelium discoideum (Social amoeba)).